The sequence spans 216 residues: Ras-related protein RABE1c (216 aa).

Residue 22–29 (GDSGVGKS) coordinates GTP. The Effector region motif lies at 44-52 (FITTIGIDF). GTP contacts are provided by residues 70-74 (DTAGQ), 128-131 (NKAD), and 159-160 (SA). 2 S-geranylgeranyl cysteine lipidation sites follow: Cys213 and Cys214.

The protein belongs to the small GTPase superfamily. Rab family. Interacts with PI5K2.

Its subcellular location is the golgi apparatus membrane. The protein resides in the cell membrane. Functionally, involved in membrane trafficking from the Golgi to the plasma membrane. The polypeptide is Ras-related protein RABE1c (RABE1C) (Arabidopsis thaliana (Mouse-ear cress)).